The primary structure comprises 286 residues: UPF0761 membrane protein KPK_5501 (286 aa).

Transmembrane regions (helical) follow at residues 44-64 (LLSLVPLIAVVFALFAAFPMF), 74-94 (FIFANFIPATGDVIQGYIEQF), 104-124 (VGAFGLIVTSLLLMYSIDSAL), 140-160 (FAVYWMILTLGPLLAGASLAI), 183-203 (LFPLILSWAAFWLLYSIVPTT), 210-230 (AVIGALVAALLFEAGKKAFAL), and 244-264 (VISVVPILFVWVYWTWCIVLL).

This sequence belongs to the UPF0761 family.

It is found in the cell inner membrane. This Klebsiella pneumoniae (strain 342) protein is UPF0761 membrane protein KPK_5501.